Consider the following 322-residue polypeptide: Cytochrome f (322 aa).

The N-terminal stretch at 1-35 (MQTRNTFSWTWIREEITRSISVSLMIYIITWSSIS) is a signal peptide. Residues Y38, C58, C61, and H62 each coordinate heme. Residues 288 to 308 (VQGLLFFLGSVVLAQIFLVLK) traverse the membrane as a helical segment.

This sequence belongs to the cytochrome f family. As to quaternary structure, the 4 large subunits of the cytochrome b6-f complex are cytochrome b6, subunit IV (17 kDa polypeptide, petD), cytochrome f and the Rieske protein, while the 4 small subunits are PetG, PetL, PetM and PetN. The complex functions as a dimer. Heme serves as cofactor.

The protein localises to the plastid. It localises to the chloroplast thylakoid membrane. Functionally, component of the cytochrome b6-f complex, which mediates electron transfer between photosystem II (PSII) and photosystem I (PSI), cyclic electron flow around PSI, and state transitions. The polypeptide is Cytochrome f (Aethionema grandiflorum (Persian stone-cress)).